Here is a 460-residue protein sequence, read N- to C-terminus: NADH-ubiquinone oxidoreductase chain 4 (460 aa).

The next 13 helical transmembrane spans lie at 20 to 42, 61 to 81, 94 to 113, 114 to 134, 148 to 168, 195 to 215, 225 to 245, 258 to 278, 285 to 304, 308 to 330, 351 to 371, 380 to 400, and 436 to 456; these read SKWL…LTWL, PLST…ILAS, RMYI…AFGA, TKII…LIII, TYFL…LLLL, IWWA…GMHL, PVAG…YGMM, LAYP…LVCL, SLIA…GILI, WGFT…LFCL, MVLP…LALP, LMII…TGMG, and LLMT…ELMW.

Belongs to the complex I subunit 4 family. As to quaternary structure, core subunit of respiratory chain NADH dehydrogenase (Complex I) which is composed of 45 different subunits.

Its subcellular location is the mitochondrion inner membrane. It catalyses the reaction a ubiquinone + NADH + 5 H(+)(in) = a ubiquinol + NAD(+) + 4 H(+)(out). Functionally, core subunit of the mitochondrial membrane respiratory chain NADH dehydrogenase (Complex I) which catalyzes electron transfer from NADH through the respiratory chain, using ubiquinone as an electron acceptor. Essential for the catalytic activity and assembly of complex I. This chain is NADH-ubiquinone oxidoreductase chain 4 (mt-nd4), found in Danio rerio (Zebrafish).